The chain runs to 186 residues: Large ribosomal subunit protein uL5c (186 aa).

This sequence belongs to the universal ribosomal protein uL5 family. As to quaternary structure, part of the 50S ribosomal subunit; contacts the 5S rRNA.

It localises to the plastid. It is found in the chloroplast. Functionally, binds 5S rRNA, forms part of the central protuberance of the 50S subunit. The chain is Large ribosomal subunit protein uL5c (rpl5) from Pleurastrum terricola (Filamentous green alga).